We begin with the raw amino-acid sequence, 69 residues long: DNA-directed RNA polymerase subunit epsilon (69 aa).

This sequence belongs to the RNA polymerase subunit epsilon family. RNAP is composed of a core of 2 alpha, a beta and a beta' subunit. The core is associated with a delta subunit, and at least one of epsilon or omega. When a sigma factor is associated with the core the holoenzyme is formed, which can initiate transcription.

The enzyme catalyses RNA(n) + a ribonucleoside 5'-triphosphate = RNA(n+1) + diphosphate. In terms of biological role, a non-essential component of RNA polymerase (RNAP). The sequence is that of DNA-directed RNA polymerase subunit epsilon from Listeria welshimeri serovar 6b (strain ATCC 35897 / DSM 20650 / CCUG 15529 / CIP 8149 / NCTC 11857 / SLCC 5334 / V8).